Reading from the N-terminus, the 657-residue chain is Heat shock protein hsp-6 (657 aa).

A mitochondrion-targeting transit peptide spans 1 to 27 (MLSARSFLSSARTIARSSLMSARSLSD). The tract at residues 637–657 (KNSGGDAQEAKTAEEPKKEQN) is disordered. Residues 644–657 (QEAKTAEEPKKEQN) show a composition bias toward basic and acidic residues.

The protein belongs to the heat shock protein 70 family.

It is found in the mitochondrion. The sequence is that of Heat shock protein hsp-6 from Caenorhabditis elegans.